Consider the following 341-residue polypeptide: Heme A synthase (341 aa).

5 helical membrane passes run 11–31 (AVST…IIGG), 101–121 (LIGL…HLSA), 127–147 (LFGL…MVAS), 160–180 (LATH…FSLE), and 194–214 (AGVT…GAFV). Residue His259 participates in heme binding. The next 3 membrane-spanning stretches (helical) occupy residues 261 to 278 (WTGY…WQVW), 288 to 308 (FMVI…AALL), and 315 to 335 (LSLA…AAAW). Residue His319 participates in heme binding.

This sequence belongs to the COX15/CtaA family. Type 2 subfamily. As to quaternary structure, interacts with CtaB. Heme b is required as a cofactor.

It localises to the cell membrane. It carries out the reaction Fe(II)-heme o + 2 A + H2O = Fe(II)-heme a + 2 AH2. It participates in porphyrin-containing compound metabolism; heme A biosynthesis; heme A from heme O: step 1/1. Functionally, catalyzes the conversion of heme O to heme A by two successive hydroxylations of the methyl group at C8. The first hydroxylation forms heme I, the second hydroxylation results in an unstable dihydroxymethyl group, which spontaneously dehydrates, resulting in the formyl group of heme A. This is Heme A synthase from Maricaulis maris (strain MCS10) (Caulobacter maris).